The chain runs to 67 residues: ATP synthase protein 8 (67 aa).

A helical transmembrane segment spans residues 8–24; sequence TWFITILSMLMTLFILF. K54 is subject to N6-acetyllysine; alternate. Residue K54 is modified to N6-succinyllysine; alternate. K57 is subject to N6-acetyllysine.

It belongs to the ATPase protein 8 family. In terms of assembly, F-type ATPases have 2 components, CF(1) - the catalytic core - and CF(0) - the membrane proton channel. Component of an ATP synthase complex composed of ATP5PB, ATP5MC1, ATP5F1E, ATP5PD, ATP5ME, ATP5PF, ATP5MF, MT-ATP6, MT-ATP8, ATP5F1A, ATP5F1B, ATP5F1D, ATP5F1C, ATP5PO, ATP5MG, ATP5MK and ATP5MJ. Interacts with PRICKLE3.

It is found in the mitochondrion membrane. Mitochondrial membrane ATP synthase (F(1)F(0) ATP synthase or Complex V) produces ATP from ADP in the presence of a proton gradient across the membrane which is generated by electron transport complexes of the respiratory chain. F-type ATPases consist of two structural domains, F(1) - containing the extramembraneous catalytic core and F(0) - containing the membrane proton channel, linked together by a central stalk and a peripheral stalk. During catalysis, ATP synthesis in the catalytic domain of F(1) is coupled via a rotary mechanism of the central stalk subunits to proton translocation. Part of the complex F(0) domain. Minor subunit located with subunit a in the membrane. The polypeptide is ATP synthase protein 8 (MT-ATP8) (Vicugna pacos (Alpaca)).